The sequence spans 527 residues: EGF domain-specific O-linked N-acetylglucosamine transferase (527 aa).

The signal sequence occupies residues 1-17 (MFMLLVFGALLPEVPLS). The Required for optimal activity signature appears at 295-297 (DYD). A glycan (N-linked (GlcNAc...) asparagine) is linked at asparagine 354. A Prevents secretion from ER motif is present at residues 524–527 (HDEL).

Belongs to the glycosyltransferase 61 family.

It is found in the endoplasmic reticulum lumen. The enzyme catalyses L-seryl-[protein] + UDP-N-acetyl-alpha-D-glucosamine = 3-O-(N-acetyl-beta-D-glucosaminyl)-L-seryl-[protein] + UDP + H(+). It carries out the reaction L-threonyl-[protein] + UDP-N-acetyl-alpha-D-glucosamine = 3-O-(N-acetyl-beta-D-glucosaminyl)-L-threonyl-[protein] + UDP + H(+). Functionally, catalyzes the transfer of a single N-acetylglucosamine from UDP-GlcNAc to a serine or threonine residue in extracellular proteins resulting in their modification with a beta-linked N-acetylglucosamine (O-GlcNAc). Specifically glycosylates the Thr residue located between the fifth and sixth conserved cysteines of folded EGF-like domains. In Bos taurus (Bovine), this protein is EGF domain-specific O-linked N-acetylglucosamine transferase (EOGT).